We begin with the raw amino-acid sequence, 221 residues long: GTP-binding nuclear protein Ran/TC4 (221 aa).

The Small GTPase Ran-type domain occupies 10 to 174 (DYPSFKLVIV…LYLARKLAGD (165 aa)). 21–28 (DGGTGKTT) lines the GTP pocket. The switch-I stretch occupies residues 40 to 48 (KKYEPTIGV). GTP contacts are provided by residues glycine 71, 125–128 (NKVD), and 153–155 (SAK). Residues 71–87 (GQEKFGGLRDGYYIHGQ) form a switch-II region.

It belongs to the small GTPase superfamily. Ran family. In terms of assembly, found in a nuclear export complex with RanGTP, exportin and pre-miRNA.

The protein localises to the nucleus. GTP-binding protein involved in nucleocytoplasmic transport. Required for the import of protein into the nucleus and also for RNA export. Involved in chromatin condensation and control of cell cycle. The polypeptide is GTP-binding nuclear protein Ran/TC4 (Vicia faba (Broad bean)).